A 321-amino-acid polypeptide reads, in one-letter code: Glycerol-3-phosphate dehydrogenase [NAD(P)+] (321 aa).

3 residues coordinate NADPH: Trp15, Arg35, and Lys101. Sn-glycerol 3-phosphate-binding residues include Lys101 and Gly129. Ala133 lines the NADPH pocket. Residues Lys184, Asp237, Ser247, Arg248, and Asn249 each coordinate sn-glycerol 3-phosphate. Residue Lys184 is the Proton acceptor of the active site. Arg248 contacts NADPH. Val268 and Glu270 together coordinate NADPH.

This sequence belongs to the NAD-dependent glycerol-3-phosphate dehydrogenase family.

The protein resides in the cytoplasm. It catalyses the reaction sn-glycerol 3-phosphate + NAD(+) = dihydroxyacetone phosphate + NADH + H(+). It carries out the reaction sn-glycerol 3-phosphate + NADP(+) = dihydroxyacetone phosphate + NADPH + H(+). Its pathway is membrane lipid metabolism; glycerophospholipid metabolism. Functionally, catalyzes the reduction of the glycolytic intermediate dihydroxyacetone phosphate (DHAP) to sn-glycerol 3-phosphate (G3P), the key precursor for phospholipid synthesis. This is Glycerol-3-phosphate dehydrogenase [NAD(P)+] from Acidiphilium cryptum (strain JF-5).